A 174-amino-acid polypeptide reads, in one-letter code: ATP synthase subunit b, organellar chromatophore (174 aa).

A helical membrane pass occupies residues L26–E46.

It belongs to the ATPase B chain family. As to quaternary structure, F-type ATPases have 2 components, F(1) - the catalytic core - and F(0) - the membrane proton channel. F(1) has five subunits: alpha(3), beta(3), gamma(1), delta(1), epsilon(1). F(0) has four main subunits: a(1), b(1), b'(1) and c(10-14). The alpha and beta chains form an alternating ring which encloses part of the gamma chain. F(1) is attached to F(0) by a central stalk formed by the gamma and epsilon chains, while a peripheral stalk is formed by the delta, b and b' chains.

Its subcellular location is the plastid. It is found in the organellar chromatophore thylakoid membrane. In terms of biological role, f(1)F(0) ATP synthase produces ATP from ADP in the presence of a proton or sodium gradient. F-type ATPases consist of two structural domains, F(1) containing the extramembraneous catalytic core and F(0) containing the membrane proton channel, linked together by a central stalk and a peripheral stalk. During catalysis, ATP synthesis in the catalytic domain of F(1) is coupled via a rotary mechanism of the central stalk subunits to proton translocation. Functionally, component of the F(0) channel, it forms part of the peripheral stalk, linking F(1) to F(0). This Paulinella chromatophora protein is ATP synthase subunit b, organellar chromatophore.